The sequence spans 127 residues: Fluoride-specific ion channel FluC (127 aa).

4 consecutive transmembrane segments (helical) span residues 4 to 24, 35 to 55, 71 to 91, and 103 to 123; these read LLLA…LLSM, LGTL…FAWF, TGFC…VFLL, and VFVN…LFSA. The Na(+) site is built by glycine 75 and threonine 78.

Belongs to the fluoride channel Fluc/FEX (TC 1.A.43) family.

It localises to the cell inner membrane. It carries out the reaction fluoride(in) = fluoride(out). Na(+) is not transported, but it plays an essential structural role and its presence is essential for fluoride channel function. Its function is as follows. Fluoride-specific ion channel. Important for reducing fluoride concentration in the cell, thus reducing its toxicity. This is Fluoride-specific ion channel FluC from Escherichia coli O7:K1 (strain IAI39 / ExPEC).